Here is a 655-residue protein sequence, read N- to C-terminus: Protein nipi-3 (655 aa).

Residues 1–35 (MARTKCKTKTVANPRTGVRKTAKDLSEPVRQDAVS) are disordered. The segment covering 21-35 (TAKDLSEPVRQDAVS) has biased composition (basic and acidic residues). In terms of domain architecture, Protein kinase spans 200 to 470 (IGIFVIYGTG…NQVNGDFPEI (271 aa)). Residues 206–214 (YGTGLVTRA) and Lys235 contribute to the ATP site.

Belongs to the protein kinase superfamily. CAMK Ser/Thr protein kinase family. As to quaternary structure, may interact with transcription factor cebp-1 (via N-terminus). Expressed in epidermis, pharynx, intestine, a subset of head neurons and motoneurons.

It localises to the nucleus. Adapter protein that regulates different signaling pathways. Required for larval development and viability. Involved in negatively modulating pmk-1 p38/MAPK signaling. Involved in innate immunity, acting either in a manner dependent upon, or independent of, the pmk-1 or pmk-3 p38/MAPK pathways. Has a protective role in response to infection by the Gram-negative bacterium P.aeruginosa, acting by negatively modulating expression of cebp-1, and regulating the pmk-1 p38/MAPK pathway, leading to activation of transcription factor skn-1. Required to prevent P.aeruginosa toxin ToxA-mediated lethality, probably acting via modulating the effects of translational inhibition caused by the toxin. By regulating the up-regulation in the epidermis of antimicrobial peptides nlp-29 and nlp-31, plays a role in resistance to fungal infection. In Caenorhabditis elegans, this protein is Protein nipi-3.